The chain runs to 445 residues: Phosphoglucosamine mutase (445 aa).

Ser-101 functions as the Phosphoserine intermediate in the catalytic mechanism. Mg(2+) contacts are provided by Ser-101, Asp-240, Asp-242, and Asp-244. Residue Ser-101 is modified to Phosphoserine.

It belongs to the phosphohexose mutase family. The cofactor is Mg(2+). In terms of processing, activated by phosphorylation.

It catalyses the reaction alpha-D-glucosamine 1-phosphate = D-glucosamine 6-phosphate. Functionally, catalyzes the conversion of glucosamine-6-phosphate to glucosamine-1-phosphate. The protein is Phosphoglucosamine mutase of Pseudomonas fluorescens (strain Pf0-1).